A 330-amino-acid chain; its full sequence is Lactamase-like protein nscB (330 aa).

The Zn(2+) site is built by H97, H99, D101, and H102. D101 functions as the Proton donor/acceptor in the catalytic mechanism.

This sequence belongs to the metallo-beta-lactamase superfamily. The cofactor is Zn(2+).

It participates in secondary metabolite biosynthesis. In terms of biological role, lactamase-like protein; part of the gene cluster that mediates the biosynthesis of neosartoricin, a prenylated anthracenone that exhibits T-cell antiproliferative activity, suggestive of a physiological role as an immunosuppressive agent. The non-reducing polyketide synthase nscA probably synthesizes and cyclizes the decaketide backbone. The hydrolase nscB then mediates the product release through hydrolysis followed by spontaneous decarboxylation. The prenyltransferase nscD catalyzes the addition of the dimethylallyl group to the aromatic C5. The FAD-dependent monooxygenase nscC is then responsible for the stereospecific hydroxylation at C2. There is no gene encoding O-acetyltransferase in the nsc gene cluster; thus, the last step of 2-O-acetylation leading to neosartoricin may be catalyzed by an unidentified O-acetyltransferase. This is Lactamase-like protein nscB from Aspergillus fumigatus (strain ATCC MYA-4609 / CBS 101355 / FGSC A1100 / Af293) (Neosartorya fumigata).